The sequence spans 181 residues: MNTDKLALIKQSIKTIPDYPKPGIMFRDVTSLMEDPAAYQATIALFVERYKDLGVTKVVGTEARGFLFGAPLALELGVGFVPVRKPGKLPRETISESYELEYGHDMLEIHTDAIKPGDKVLVVDDLLATGGTIEATVKLIRQLGGEVEHAAFVISLPELGGEHRLAEMGLSLMTLCEFEGE.

The protein belongs to the purine/pyrimidine phosphoribosyltransferase family. Homodimer.

The protein resides in the cytoplasm. It carries out the reaction AMP + diphosphate = 5-phospho-alpha-D-ribose 1-diphosphate + adenine. It functions in the pathway purine metabolism; AMP biosynthesis via salvage pathway; AMP from adenine: step 1/1. Catalyzes a salvage reaction resulting in the formation of AMP, that is energically less costly than de novo synthesis. The sequence is that of Adenine phosphoribosyltransferase from Shewanella loihica (strain ATCC BAA-1088 / PV-4).